Reading from the N-terminus, the 426-residue chain is Ankyrin repeat-containing protein BDA1 (426 aa).

ANK repeat units lie at residues 1–29 (MDSK…DILQ), 36–65 (IIHT…SFAK), 70–99 (YGLS…SLVR), 104–134 (GGMT…SIKD), 138–167 (NGET…KMRD), and 182–212 (GGNT…DRNI). Transmembrane regions (helical) follow at residues 288–308 (ALLV…AQLL), 329–349 (WGCN…LLPV), 355–375 (WWYF…MYMM), and 380–400 (FFFL…VLYV).

It is found in the cell membrane. Functionally, involved in plant defense. Required for basal resistance against Pseudomonas syringae pv. tomato DC3000. Required for resistance against nonpathogenic bacteria. May be involved in signaling components that function downstream of SNC2 and upstream of NPR1 and WRKY70 to regulate defense responses. The chain is Ankyrin repeat-containing protein BDA1 from Arabidopsis thaliana (Mouse-ear cress).